The chain runs to 160 residues: Cytochrome b6-f complex subunit 4 (160 aa).

The next 3 helical transmembrane spans lie at 36–56, 95–115, and 131–151; these read LLYI…GLAV, LLGV…PFLE, and TVFL…TLPI.

It belongs to the cytochrome b family. PetD subfamily. As to quaternary structure, the 4 large subunits of the cytochrome b6-f complex are cytochrome b6, subunit IV (17 kDa polypeptide, petD), cytochrome f and the Rieske protein, while the 4 small subunits are petG, petL, petM and petN. The complex functions as a dimer.

Its subcellular location is the plastid. It is found in the chloroplast thylakoid membrane. Component of the cytochrome b6-f complex, which mediates electron transfer between photosystem II (PSII) and photosystem I (PSI), cyclic electron flow around PSI, and state transitions. This Sorghum bicolor (Sorghum) protein is Cytochrome b6-f complex subunit 4.